Here is a 1038-residue protein sequence, read N- to C-terminus: Kinesin-like protein KIF17 (1038 aa).

Positions 5 to 335 constitute a Kinesin motor domain; sequence SVKVVVRCRP…LRYANRAKNI (331 aa). ATP is bound at residue 91–98; sequence GQTGSGKS. The stretch at 346–470 forms a coiled coil; it reads KDALLREYQE…ETEAILKAEV (125 aa). 3 disordered regions span residues 379–401, 503–559, and 636–657; these read TQTP…VQQD, LSMP…GPEE, and DSSQ…LLEP. 2 stretches are compositionally biased toward polar residues: residues 533–551 and 636–651; these read SEFS…SATS and DSSQ…QPSS. Positions 748–855 form a coiled coil; it reads QQVLARLQLL…QLEKIDYLAT (108 aa). Disordered regions lie at residues 916 to 940 and 976 to 1038; these read VVPT…PHMQ and MKSL…GEPL. Over residues 983 to 1000 the composition is skewed to low complexity; that stretch reads NSPPGLNSSLSNNSALPP.

The protein belongs to the TRAFAC class myosin-kinesin ATPase superfamily. Kinesin family. In terms of assembly, homodimer. Interacts with APBA1 (via PDZ domain); the interaction is direct and is required for association of KIF17 with the cargo that is to be transported. Interacts with IFT B complex components IFT52 and IFT57. Interacts with IFT70B. Interacts with PIWIL1. Interacts with TBATA. As to expression, highly expressed in the gray matter of the brain, especially in the hippocampus.

It is found in the cytoplasm. The protein localises to the cytoskeleton. Its subcellular location is the cell projection. The protein resides in the cilium. It localises to the dendrite. Functionally, dendrite-specific motor protein which, in association with the Apba1-containing complex (LIN-10-LIN-2-LIN-7 complex), transports vesicles containing N-methyl-D-aspartate (NMDA) receptor subunit NR2B along microtubules. This Mus musculus (Mouse) protein is Kinesin-like protein KIF17 (Kif17).